The primary structure comprises 536 residues: GMP synthase [glutamine-hydrolyzing] (536 aa).

In terms of domain architecture, Glutamine amidotransferase type-1 spans 4–206 (KILILDFGSQ…VLDICGARAD (203 aa)). C85 (nucleophile) is an active-site residue. Residues H180 and E182 contribute to the active site. In terms of domain architecture, GMPS ATP-PPase spans 207–404 (WIMGDYISEA…LGLPYHMVYR (198 aa)). 234–240 (SGGVDSS) provides a ligand contact to ATP.

As to quaternary structure, homodimer.

The enzyme catalyses XMP + L-glutamine + ATP + H2O = GMP + L-glutamate + AMP + diphosphate + 2 H(+). It functions in the pathway purine metabolism; GMP biosynthesis; GMP from XMP (L-Gln route): step 1/1. Its function is as follows. Catalyzes the synthesis of GMP from XMP. This Albidiferax ferrireducens (strain ATCC BAA-621 / DSM 15236 / T118) (Rhodoferax ferrireducens) protein is GMP synthase [glutamine-hydrolyzing].